The chain runs to 92 residues: Small ribosomal subunit protein uS19c (92 aa).

The protein belongs to the universal ribosomal protein uS19 family.

It localises to the plastid. The protein resides in the chloroplast. In terms of biological role, protein S19 forms a complex with S13 that binds strongly to the 16S ribosomal RNA. The protein is Small ribosomal subunit protein uS19c of Amborella trichopoda.